Here is a 350-residue protein sequence, read N- to C-terminus: C5a anaphylatoxin chemotactic receptor 1 (350 aa).

Residues 1–37 (MDSFNYTTPDYGHYDDKDTLDLNTPVDKTSNTLRVPD) are Extracellular-facing. Residue N5 is glycosylated (N-linked (GlcNAc...) asparagine). Residues 10–18 (DYGHYDDKD) are required for CHIPS binding. Y11 and Y14 each carry sulfotyrosine. The tract at residues 21–30 (DLNTPVDKTS) is involved in C5a binding. Residues 38–64 (ILALVIFAVVFLVGVLGNALVVWVTAF) traverse the membrane as a helical segment. Over 65-69 (EAKRT) the chain is Cytoplasmic. The helical transmembrane segment at 70 to 93 (INAIWFLNLAVADFLSCLALPILF) threads the bilayer. Topologically, residues 94–110 (TSIVQHHHWPFGGAACS) are extracellular. C109 and C188 form a disulfide bridge. The helical transmembrane segment at 111–132 (ILPSLILLNMYASILLLATISA) threads the bilayer. Over 133–153 (DRFLLVFKPIWCQNFRGAGLA) the chain is Cytoplasmic. The helical transmembrane segment at 154 to 174 (WIACAVAWGLALLLTIPSFLY) threads the bilayer. The Extracellular segment spans residues 175–200 (RVVREEYFPPKVLCGVDYSHDKRRER). The chain crosses the membrane as a helical span at residues 201-226 (AVAIVRLVLGFLWPLLTLTICYTFIL). Residues 227 to 242 (LRTWSRRATRSTKTLK) are Cytoplasmic-facing. A helical membrane pass occupies residues 243 to 265 (VVVAVVASFFIFWLPYQVTGIMM). The Extracellular segment spans residues 266–282 (SFLEPSSPTFLLLKKLD). Residues 283–303 (SLCVSFAYINCCINPIIYVVA) traverse the membrane as a helical segment. Residues 304–350 (GQGFQGRLRKSLPSLLRNVLTEESVVRESKSFTRSTVDTMAQKTQAV) are Cytoplasmic-facing. 6 positions are modified to phosphoserine: S314, S317, S327, S332, S334, and S338.

Belongs to the G-protein coupled receptor 1 family. Homodimer. May also form higher-order oligomers. Interacts (when phosphorylated) with ARRB1 and ARRB2; the interaction is associated with internalization of C5aR. Interacts (via N-terminal domain) with S.aureus chemotaxis inhibitory protein (CHIPS); the interaction blocks the receptor and may thus inhibit the immune response. In terms of processing, sulfation plays a critical role in the association of C5aR with C5a, but no significant role in the ability of the receptor to transduce a signal and mobilize calcium in response to a small a small peptide agonist. Sulfation at Tyr-14 is important for CHIPS binding. Post-translationally, phosphorylated on serine residues in response to C5a binding, resulting in internalization of the receptor and short-term desensitization to the ligand. The key residues involved in this process are Ser-334 and Ser-338.

It localises to the cell membrane. The protein localises to the cytoplasmic vesicle. Its function is as follows. Receptor for the chemotactic and inflammatory peptide anaphylatoxin C5a. The ligand interacts with at least two sites on the receptor: a high-affinity site on the extracellular N-terminus, and a second site in the transmembrane region which activates downstream signaling events. Receptor activation stimulates chemotaxis, granule enzyme release, intracellular calcium release and superoxide anion production. This is C5a anaphylatoxin chemotactic receptor 1 (C5AR1) from Homo sapiens (Human).